Consider the following 117-residue polypeptide: Immunoglobulin heavy variable 4-38-2 (117 aa).

The signal sequence occupies residues 1 to 19; it reads MKHLWFFLLLVAAPRWVLS. The framework-1 stretch occupies residues 20–44; the sequence is QVQLQESGPGLVKPSETLSLTCTVS. Residues 20 to 117 enclose the Ig-like domain; it reads QVQLQESGPG…ADTAVYYCAR (98 aa). A disulfide bond links cysteine 41 and cysteine 115. The interval 45-53 is complementarity-determining-1; it reads GYSISSGYY. Residues 54–70 form a framework-2 region; the sequence is WGWIRQPPGKGLEWIGS. The tract at residues 71–77 is complementarity-determining-2; sequence IYHSGST. The interval 78–115 is framework-3; sequence YYNPSLKSRVTISVDTSKNQFSLKLSSVTAADTAVYYC. Positions 116–117 are complementarity-determining-3; sequence AR.

In terms of assembly, immunoglobulins are composed of two identical heavy chains and two identical light chains; disulfide-linked.

It is found in the secreted. The protein localises to the cell membrane. In terms of biological role, v region of the variable domain of immunoglobulin heavy chains that participates in the antigen recognition. Immunoglobulins, also known as antibodies, are membrane-bound or secreted glycoproteins produced by B lymphocytes. In the recognition phase of humoral immunity, the membrane-bound immunoglobulins serve as receptors which, upon binding of a specific antigen, trigger the clonal expansion and differentiation of B lymphocytes into immunoglobulins-secreting plasma cells. Secreted immunoglobulins mediate the effector phase of humoral immunity, which results in the elimination of bound antigens. The antigen binding site is formed by the variable domain of one heavy chain, together with that of its associated light chain. Thus, each immunoglobulin has two antigen binding sites with remarkable affinity for a particular antigen. The variable domains are assembled by a process called V-(D)-J rearrangement and can then be subjected to somatic hypermutations which, after exposure to antigen and selection, allow affinity maturation for a particular antigen. The polypeptide is Immunoglobulin heavy variable 4-38-2 (Homo sapiens (Human)).